A 521-amino-acid polypeptide reads, in one-letter code: MMQPDHDLPYDLEGEILSHLPIQILARFRCVCKRWNTLFKERRFFNSDLGLARPQFILLAESKICSVDVNLDGPSIEVHNLPSDIPGYKLYMPMHVEYCDGLFLYATCYGIGICNPWLRQIRWFKSSYEGYDFSGMGYDNSRQDKHYKILGSYCTNTTMNASVTELGSDAWKSYEFAFHSWNLSMSPYSVSLNGNLYWVAYNHESRDYFIQSFDFSTVSFKHYCILPTKNGHRQCDGRSLAIFREDRFSFLEQEIYNTRNIEIWVTKETIKNGDGEAVEWVNLMSVLVPEWSSLSVNYYPPSYFVDEDKVGLTLVICCYNKEGKAYIYIAKGDKFHEIEIKDLVEYNPRHRTYFPNLIQVPTFTMSGRSITQHQVESRFAPLRGIQVSVGVGGDEWDDGFFDNVKEIIIHTNSLGIIFVKFYYRNGNVRVAGAAHGDSTETRGLMVPDDDYIEAVQGTYTESHITSMAFRLHKGNRSLRFGFFEGMSFVLGGARGSKIIGFYGRSSDLYLTAFGVHFSPLP.

An F-box domain is found at 2 to 48 (MQPDHDLPYDLEGEILSHLPIQILARFRCVCKRWNTLFKERRFFNSD). Kelch repeat units lie at residues 145–190 (KHYK…PYSV), 326–373 (YIYI…ITQH), and 486–521 (MSFV…SPLP). Residues 377-519 (SRFAPLRGIQ…LTAFGVHFSP (143 aa)) enclose the Jacalin-type lectin domain.

This sequence belongs to the jacalin lectin family.

The sequence is that of Jacalin-related lectin 38 (JAL38) from Arabidopsis thaliana (Mouse-ear cress).